The sequence spans 90 residues: MKERWRFLIEGSVQGVGFRNSCRRRALDLGLCGWVRNLKDGVVEIQAEGDELALNELRLWCERGPSAATVKRVLLSKIPVTGNDWFDVRT.

The region spanning 4 to 90 (RWRFLIEGSV…TGNDWFDVRT (87 aa)) is the Acylphosphatase-like domain. Catalysis depends on residues R19 and N37.

The protein belongs to the acylphosphatase family.

The catalysed reaction is an acyl phosphate + H2O = a carboxylate + phosphate + H(+). The sequence is that of Acylphosphatase (acyP) from Synechococcus sp. (strain CC9311).